A 201-amino-acid polypeptide reads, in one-letter code: Two-component response regulator ORR9 (201 aa).

The Response regulatory domain maps to 10–142 (HVLAVDDSLP…DMSKLKPHIL (133 aa)). D75 carries the 4-aspartylphosphate modification. A disordered region spans residues 149 to 201 (HYQQEQNLQSNSESNNSSNPTSENSSSSTSSNSHKRKAVDEEILPHTIRPRHS). Residues 158–180 (SNSESNNSSNPTSENSSSSTSSN) are compositionally biased toward low complexity.

This sequence belongs to the ARR family. Type-A subfamily. In terms of processing, two-component system major event consists of a His-to-Asp phosphorelay between a sensor histidine kinase (HK) and a response regulator (RR). In plants, the His-to-Asp phosphorelay involves an additional intermediate named Histidine-containing phosphotransfer protein (HPt). This multistep phosphorelay consists of a His-Asp-His-Asp sequential transfer of a phosphate group between first a His and an Asp of the HK protein, followed by the transfer to a conserved His of the HPt protein and finally the transfer to an Asp in the receiver domain of the RR protein.

Functionally, functions as a response regulator involved in His-to-Asp phosphorelay signal transduction system. Phosphorylation of the Asp residue in the receiver domain activates the ability of the protein to promote the transcription of target genes. Type-A response regulators seem to act as negative regulators of the cytokinin signaling. The protein is Two-component response regulator ORR9 of Oryza sativa subsp. japonica (Rice).